The following is a 592-amino-acid chain: Anaphase-promoting complex subunit 8 (592 aa).

TPR repeat units lie at residues 66–99 (EYYK…QLPI), 160–193 (QQQQ…NKKD), 291–324 (TYIL…EPNR), 359–392 (PETC…NDRY), 393–426 (LSAW…NPRD), 428–460 (RAWY…RPYD), 461–494 (PRMW…YDRE), and 496–528 (VAIN…CDQE). The interval 129–166 (QQQAQQQAQQAQQESQQNDKNNDTNNNNKTDQQQQQQQ) is disordered.

This sequence belongs to the APC8/CDC23 family. As to quaternary structure, the APC/C is composed of at least 13 subunits that stay tightly associated throughout the cell cycle: anapc1, anapc2, anapc3, anapc4, anapc5, anapc6, anapc7, anapc8, anapc10, anapc11, cdc20, cdc26 and cdh1.

The protein localises to the nucleus. Its pathway is protein modification; protein ubiquitination. Its function is as follows. Component of the anaphase promoting complex/cyclosome (APC/C), a cell cycle-regulated E3 ubiquitin-protein ligase complex that controls progression through mitosis and the G1 phase of the cell cycle. This Dictyostelium discoideum (Social amoeba) protein is Anaphase-promoting complex subunit 8 (anapc8).